Here is a 518-residue protein sequence, read N- to C-terminus: GMP synthase [glutamine-hydrolyzing] (518 aa).

Positions 8 to 201 constitute a Glutamine amidotransferase type-1 domain; sequence TVLIIDFGSQ…VHKISGLKGN (194 aa). The active-site Nucleophile is the Cys-85. Residues His-175 and Glu-177 contribute to the active site. The region spanning 202 to 393 is the GMPS ATP-PPase domain; that stretch reads WSMASYRDQA…LGLPEQFLGR (192 aa). An ATP-binding site is contributed by 229–235; the sequence is SGGVDSS.

Homodimer.

The catalysed reaction is XMP + L-glutamine + ATP + H2O = GMP + L-glutamate + AMP + diphosphate + 2 H(+). The protein operates within purine metabolism; GMP biosynthesis; GMP from XMP (L-Gln route): step 1/1. Catalyzes the synthesis of GMP from XMP. This is GMP synthase [glutamine-hydrolyzing] from Bartonella quintana (strain Toulouse) (Rochalimaea quintana).